The primary structure comprises 183 residues: NRR repressor homolog 1 (183 aa).

Disordered regions lie at residues 1–40 and 66–183; these read MEGVDVKAPRPGCGGDDGGAAAASLSARREEEEEGAVVGG and NGEE…PTDQ. Over residues 31 to 40 the composition is skewed to acidic residues; the sequence is EEEEGAVVGG. Gly residues predominate over residues 70–79; the sequence is GAAGGDGDGA. Residues 101–115 are compositionally biased toward acidic residues; it reads FEFEEAAAGAGDDDA. Basic and acidic residues predominate over residues 135–145; it reads AVEKRRTEKEA. Residues 150–161 show a composition bias toward acidic residues; the sequence is AEDDDDEQEGGE. Basic and acidic residues predominate over residues 163 to 183; that stretch reads VEGKEEHRPGRRVEAHGPTDQ.

The protein belongs to the NPR1-interactor family. In terms of assembly, interacts with NPR1/NH1. Interacts with NPR3/NH3.

The protein resides in the nucleus. Its function is as follows. Binds to and represses NPR1/NH1-mediated transcriptional activation of LG2 in vitro. This chain is NRR repressor homolog 1, found in Oryza sativa subsp. japonica (Rice).